A 284-amino-acid polypeptide reads, in one-letter code: 4-hydroxybenzoate octaprenyltransferase (284 aa).

Helical transmembrane passes span 19–39, 42–62, 93–113, 114–134, 136–156, 158–178, 210–230, 233–253, and 264–284; these read IGSL…AQGL, LRVL…GCVI, LLLF…MNTL, TIQL…MKRF, HLPQ…AWAA, ANTL…WTIA, IIGL…QGLA, TSYY…QHLI, and AFLN…LSVW.

This sequence belongs to the UbiA prenyltransferase family. It depends on Mg(2+) as a cofactor.

The protein localises to the cell inner membrane. The enzyme catalyses all-trans-octaprenyl diphosphate + 4-hydroxybenzoate = 4-hydroxy-3-(all-trans-octaprenyl)benzoate + diphosphate. It participates in cofactor biosynthesis; ubiquinone biosynthesis. Its function is as follows. Catalyzes the prenylation of para-hydroxybenzoate (PHB) with an all-trans polyprenyl group. Mediates the second step in the final reaction sequence of ubiquinone-8 (UQ-8) biosynthesis, which is the condensation of the polyisoprenoid side chain with PHB, generating the first membrane-bound Q intermediate 3-octaprenyl-4-hydroxybenzoate. In Vibrio cholerae serotype O1 (strain ATCC 39541 / Classical Ogawa 395 / O395), this protein is 4-hydroxybenzoate octaprenyltransferase.